A 249-amino-acid polypeptide reads, in one-letter code: Undecaprenyl-diphosphatase (249 aa).

8 consecutive transmembrane segments (helical) span residues 11–31 (GLTE…TAIF), 35–55 (PDVG…LIFV), 80–100 (LVLS…FIES), 101–121 (VFSS…LMLL), 135–155 (IPYL…LPGI), 180–200 (FLMS…KVAF), 202–222 (TEQI…LYLV), and 226–246 (VIGG…FFVL).

Belongs to the UppP family.

It is found in the cell membrane. The catalysed reaction is di-trans,octa-cis-undecaprenyl diphosphate + H2O = di-trans,octa-cis-undecaprenyl phosphate + phosphate + H(+). Its function is as follows. Catalyzes the dephosphorylation of undecaprenyl diphosphate (UPP). This chain is Undecaprenyl-diphosphatase, found in Methanococcus maripaludis (strain C6 / ATCC BAA-1332).